The following is a 198-amino-acid chain: Large ribosomal subunit protein uL24c (198 aa).

The transit peptide at 1–50 directs the protein to the chloroplast; that stretch reads MATMSALQSSFTSLSLSPSSSFLGQRLISPISLSVTSPVKPAENPCLVLA.

The protein belongs to the universal ribosomal protein uL24 family. In terms of assembly, part of the 50S ribosomal subunit.

Its subcellular location is the plastid. The protein localises to the chloroplast. Functionally, one of two assembly initiator proteins, it binds directly to the 5'-end of the 23S rRNA, where it nucleates assembly of the 50S subunit. Required for optimal plastid performance in terms of photosynthesis and growth. Required for the translation of plastid mRNAs. Plays a critical role in biosynthesis of thylakoid membrane proteins encoded by chloroplast genes. This Arabidopsis thaliana (Mouse-ear cress) protein is Large ribosomal subunit protein uL24c (RPL24).